The primary structure comprises 404 residues: Acetate kinase (404 aa).

Residue N7 coordinates Mg(2+). K14 lines the ATP pocket. Residue R91 coordinates substrate. The active-site Proton donor/acceptor is D148. ATP is bound by residues 208–212 (HLGNG) and 283–285 (DLR). Mg(2+) is bound at residue E388.

It belongs to the acetokinase family. Homodimer. The cofactor is Mg(2+). Mn(2+) serves as cofactor.

It is found in the cytoplasm. The enzyme catalyses acetate + ATP = acetyl phosphate + ADP. The protein operates within metabolic intermediate biosynthesis; acetyl-CoA biosynthesis; acetyl-CoA from acetate: step 1/2. In terms of biological role, catalyzes the formation of acetyl phosphate from acetate and ATP. Can also catalyze the reverse reaction. In Borrelia turicatae (strain 91E135), this protein is Acetate kinase.